Reading from the N-terminus, the 102-residue chain is uncharacterized protein (102 aa).

The HTH cro/C1-type domain maps to 48-102 (LNDKRKSLGIELSMLELQTGVSISTLNRLFQDPSQVRFTTVFLVAQTLGVSLCAI). The H-T-H motif DNA-binding region spans 59-78 (LSMLELQTGVSISTLNRLFQ).

This is an uncharacterized protein from Haemophilus influenzae (strain ATCC 51907 / DSM 11121 / KW20 / Rd).